A 480-amino-acid polypeptide reads, in one-letter code: UDP-glycosyltransferase 72B1 (480 aa).

His19 acts as the Proton acceptor in catalysis. Asp117 (charge relay) is an active-site residue. 4 residues coordinate UDP: Ser277, Trp346, Ala347, and His364. UDP-alpha-D-glucose contacts are provided by Ser277, Trp346, Ala347, His364, Trp367, Asn368, Ser369, Glu372, Tyr386, Glu388, and Gln389. Positions 368, 369, 372, and 386 each coordinate UDP.

It belongs to the UDP-glycosyltransferase family.

The catalysed reaction is hydroquinone + UDP-alpha-D-glucose = hydroquinone O-beta-D-glucopyranoside + UDP + H(+). Bifunctional O-glycosyltransferase and N-glycosyltransferase that can detoxify xenobiotics. Possesses high activity to metabolize the persistent pollutants 2,4,5-trichlorophenol (TCP) and 3,4-dichloroaniline (DCA). Also active on benzoates and benzoate derivatives in vitro. The sequence is that of UDP-glycosyltransferase 72B1 (UGT72B1) from Arabidopsis thaliana (Mouse-ear cress).